The sequence spans 117 residues: Hydrogenase maturation factor HypA (117 aa).

His2 serves as a coordination point for Ni(2+). Positions 73, 76, 89, and 92 each coordinate Zn(2+).

It belongs to the HypA/HybF family.

Its function is as follows. Involved in the maturation of [NiFe] hydrogenases. Required for nickel insertion into the metal center of the hydrogenase. The protein is Hydrogenase maturation factor HypA of Shewanella baltica (strain OS195).